The chain runs to 304 residues: C-type lectin domain-containing protein 141 (304 aa).

An N-terminal signal peptide occupies residues 1-19 (MRSSSTLLIAFGLFLASMS). The disordered stretch occupies residues 29–100 (GSGGHRPPSS…TTPEPTTTKV (72 aa)). Residues 51–99 (TKPPKSTSTPSTSTSTPTTTTTTTTTTTTTPTTTTTTTTTTTPEPTTTK) are compositionally biased toward low complexity.

This chain is C-type lectin domain-containing protein 141 (clec-141), found in Caenorhabditis elegans.